Here is a 96-residue protein sequence, read N- to C-terminus: Large ribosomal subunit protein bL27 (96 aa).

Positions 1–11 (MLKTLENLQLF) are excised as a propeptide. Residues 13-36 (HKKGGGSTSNGRDSQAKRLGAKAA) form a disordered region.

Belongs to the bacterial ribosomal protein bL27 family. In terms of processing, the N-terminus is cleaved by ribosomal processing cysteine protease Prp.

In Streptococcus thermophilus (strain CNRZ 1066), this protein is Large ribosomal subunit protein bL27.